Here is a 147-residue protein sequence, read N- to C-terminus: UPF0260 protein PMI1174 (147 aa).

It belongs to the UPF0260 family.

This is UPF0260 protein PMI1174 from Proteus mirabilis (strain HI4320).